We begin with the raw amino-acid sequence, 190 residues long: Probable molybdenum cofactor guanylyltransferase (190 aa).

GTP contacts are provided by residues 9–11 (LCG), lysine 21, aspartate 65, and aspartate 94. Aspartate 94 contributes to the Mg(2+) binding site.

The protein belongs to the MobA family. The cofactor is Mg(2+).

It is found in the cytoplasm. It carries out the reaction Mo-molybdopterin + GTP + H(+) = Mo-molybdopterin guanine dinucleotide + diphosphate. Transfers a GMP moiety from GTP to Mo-molybdopterin (Mo-MPT) cofactor (Moco or molybdenum cofactor) to form Mo-molybdopterin guanine dinucleotide (Mo-MGD) cofactor. The chain is Probable molybdenum cofactor guanylyltransferase from Flavobacterium johnsoniae (strain ATCC 17061 / DSM 2064 / JCM 8514 / BCRC 14874 / CCUG 350202 / NBRC 14942 / NCIMB 11054 / UW101) (Cytophaga johnsonae).